Reading from the N-terminus, the 263-residue chain is Endonuclease 8 (263 aa).

Proline 2 (schiff-base intermediate with DNA) is an active-site residue. Glutamate 3 acts as the Proton donor in catalysis. The active-site Proton donor; for beta-elimination activity is the lysine 53. The DNA site is built by glutamine 70, arginine 125, and asparagine 169. An FPG-type zinc finger spans residues 229 to 263 (KVFHRDGEVCERCGGIIEKTTLSSRPFYWCPHCQK). The active-site Proton donor; for delta-elimination activity is arginine 253.

It belongs to the FPG family. Zn(2+) serves as cofactor.

The enzyme catalyses 2'-deoxyribonucleotide-(2'-deoxyribose 5'-phosphate)-2'-deoxyribonucleotide-DNA = a 3'-end 2'-deoxyribonucleotide-(2,3-dehydro-2,3-deoxyribose 5'-phosphate)-DNA + a 5'-end 5'-phospho-2'-deoxyribonucleoside-DNA + H(+). Its function is as follows. Involved in base excision repair of DNA damaged by oxidation or by mutagenic agents. Acts as a DNA glycosylase that recognizes and removes damaged bases. Has a preference for oxidized pyrimidines, such as thymine glycol, 5,6-dihydrouracil and 5,6-dihydrothymine. Has AP (apurinic/apyrimidinic) lyase activity and introduces nicks in the DNA strand. Cleaves the DNA backbone by beta-delta elimination to generate a single-strand break at the site of the removed base with both 3'- and 5'-phosphates. The polypeptide is Endonuclease 8 (Salmonella newport (strain SL254)).